The following is a 381-amino-acid chain: MIISASTDYRAAAQRKLPPFLFHYADGGAYAEHTLRHNVSDLAGIALRQRVLNNMSELSLETKLFDETLSMPVALAPVGLTGMYARRGEVQAARAAAAHGIPFTMSTVSVCPIEEVAPAINRPMWFQLYVLKDRGFMRNALERAKAAGVKTLVFTVDMPVPGARYRDAHSGMSGKNGPLRRVLQAMTHPEWAWDVGVMGRPHDLGNISKYRGNPTGLADYIGWLGNNFDPSISWKDLEWIREFWDGPMIIKGILDADDARDAVKFGADGIVVSNHGGRQLDGVLSSARALPAIADAVKGDLKILADSGIRSGLDVVRMIALGADTVLIGRAFLYALAVHGQAGVKNLLELFEKEMRVAMVLTGAKSISEITRDSLVRELGA.

Residues 1 to 380 (MIISASTDYR…TRDSLVRELG (380 aa)) form the FMN hydroxy acid dehydrogenase domain. Residue Tyr24 coordinates substrate. Residues Ser106 and Gln127 each contribute to the FMN site. Residue Tyr129 participates in substrate binding. Thr155 is a binding site for FMN. Arg164 is a substrate binding site. FMN is bound at residue Lys251. The active-site Proton acceptor is His275. Arg278 lines the substrate pocket. An FMN-binding site is contributed by 306–330 (DSGIRSGLDVVRMIALGADTVLIGR).

This sequence belongs to the FMN-dependent alpha-hydroxy acid dehydrogenase family. Homotetramer. FMN serves as cofactor.

The protein localises to the cell inner membrane. It carries out the reaction (S)-lactate + A = pyruvate + AH2. In terms of biological role, catalyzes the conversion of L-lactate to pyruvate. Is coupled to the respiratory chain. The polypeptide is L-lactate dehydrogenase (Pseudomonas putida (strain ATCC 700007 / DSM 6899 / JCM 31910 / BCRC 17059 / LMG 24140 / F1)).